A 698-amino-acid polypeptide reads, in one-letter code: MARTTPIERYRNIGICAHVDAGKTTTTERVLFYTGLSHKIGEVHDGAATTDWMVQEQERGITITSAAVTTFWRGMDAQFTEHRINIIDTPGHVDFTIEVERSLRVLDGAVVVFCGASGVEPQSETVWRQADKYRVPRIVFVNKMDRAGADFERVVKQIRTRLGATCVPIQLNIGAEENFTGVIDLIKMKAINWNEADQGMTFSYEAIPAHLTAKAEEMHEFLVEAAAEASDELMDKYLEEGTLSEEEIKKALRQRTINNEIVLATCGSAFKNKGVQAVLDAVVEFLPAPVDVPPIKGIDDNEQEVERPSDDNAPFAALAFKIATDPFVGTLTFIRVYSGVLESGSGVYNSVKQKRERIGRIVQMHANDRTELKEVRAGDIAAAIGLKEVTTGDTLCDNDHKVILERMEFPEPVITIAVEPKSKADQDKMGIALQKLAAEDPSFRVETDEESSQTLISGMGELHLDIIVDRMRREFGVECNVGKPQVAYRETIRGSVEAEGKFVRQSGGRGQFGHVWLKLEPNEEGAGYEFINAIVGGVVPREFIPAVDKGIQEQMKNGVLAGFPVLDVKVTLFDGSYHDVDSNEMAFKIAGSMGFKKGALEAKPVLLEPCMKVEVTTPENYMGDVVGDLNRRRGLIEGMDDGFGGIKIIHAVVPLSEMFGYATDLRSATQGRASYSMEFLKYTDAPQNIAKAIIESRS.

A tr-type G domain is found at 8 to 290; that stretch reads ERYRNIGICA…AVVEFLPAPV (283 aa). GTP contacts are provided by residues 17–24, 88–92, and 142–145; these read AHVDAGKT, DTPGH, and NKMD.

Belongs to the TRAFAC class translation factor GTPase superfamily. Classic translation factor GTPase family. EF-G/EF-2 subfamily.

It localises to the cytoplasm. Catalyzes the GTP-dependent ribosomal translocation step during translation elongation. During this step, the ribosome changes from the pre-translocational (PRE) to the post-translocational (POST) state as the newly formed A-site-bound peptidyl-tRNA and P-site-bound deacylated tRNA move to the P and E sites, respectively. Catalyzes the coordinated movement of the two tRNA molecules, the mRNA and conformational changes in the ribosome. The chain is Elongation factor G 1 from Shewanella oneidensis (strain ATCC 700550 / JCM 31522 / CIP 106686 / LMG 19005 / NCIMB 14063 / MR-1).